The chain runs to 290 residues: 4-hydroxybenzoate octaprenyltransferase (290 aa).

8 consecutive transmembrane segments (helical) span residues 40 to 60 (IAGAGTPSLTVIVVFFLGVVI), 99 to 119 (LALFGGLGLLAFGLVLFLNEL), 120 to 140 (TFWLSFGGLGLAVLYPFTKRF), 142 to 162 (FMPQLFLGAAFSWAIPMAFAA), 165 to 185 (GEVPEIAWLLYVANVLWTVAY), 215 to 235 (LMIAILQALTLLALIMVGHRL), 239 to 259 (WPWYAGLVGMSLSFAFQHSLI), and 267 to 287 (SFHAFLNNHWAGACVFIGLYF).

Belongs to the UbiA prenyltransferase family. The cofactor is Mg(2+).

The protein localises to the cell inner membrane. The catalysed reaction is all-trans-octaprenyl diphosphate + 4-hydroxybenzoate = 4-hydroxy-3-(all-trans-octaprenyl)benzoate + diphosphate. It participates in cofactor biosynthesis; ubiquinone biosynthesis. Its function is as follows. Catalyzes the prenylation of para-hydroxybenzoate (PHB) with an all-trans polyprenyl group. Mediates the second step in the final reaction sequence of ubiquinone-8 (UQ-8) biosynthesis, which is the condensation of the polyisoprenoid side chain with PHB, generating the first membrane-bound Q intermediate 3-octaprenyl-4-hydroxybenzoate. This is 4-hydroxybenzoate octaprenyltransferase from Alcanivorax borkumensis (strain ATCC 700651 / DSM 11573 / NCIMB 13689 / SK2).